Reading from the N-terminus, the 155-residue chain is Snaclec clone 2100755 (155 aa).

A signal peptide spans 1 to 23 (MGRFIFVSFGLLVVFLSLSGTAA). Disulfide bonds link C25/C36, C53/C144, and C119/C136. Residues 32–145 (YDGHCYQVFS…CEKSVSFVCK (114 aa)) form the C-type lectin domain.

Belongs to the snaclec family. Heterodimer; disulfide-linked.

The protein resides in the secreted. Its function is as follows. Interferes with one step of hemostasis (modulation of platelet aggregation, or coagulation cascade, for example). This chain is Snaclec clone 2100755, found in Deinagkistrodon acutus (Hundred-pace snake).